Reading from the N-terminus, the 118-residue chain is Small ribosomal subunit protein uS13 (118 aa).

The tract at residues 94-118 is disordered; that stretch reads SLPLRGQRTKTNARTRKGPRKAIKK.

It belongs to the universal ribosomal protein uS13 family. As to quaternary structure, part of the 30S ribosomal subunit. Forms a loose heterodimer with protein S19. Forms two bridges to the 50S subunit in the 70S ribosome.

In terms of biological role, located at the top of the head of the 30S subunit, it contacts several helices of the 16S rRNA. In the 70S ribosome it contacts the 23S rRNA (bridge B1a) and protein L5 of the 50S subunit (bridge B1b), connecting the 2 subunits; these bridges are implicated in subunit movement. Contacts the tRNAs in the A and P-sites. The protein is Small ribosomal subunit protein uS13 of Pseudoalteromonas atlantica (strain T6c / ATCC BAA-1087).